The sequence spans 327 residues: (-)-delta-cadinene synthase (327 aa).

Residues Asp84, Asp85, Asn222, Thr226, and Glu230 each contribute to the Mg(2+) site.

The protein belongs to the terpene synthase family.

The enzyme catalyses (2E,6E)-farnesyl diphosphate = (-)-delta-cadinene + diphosphate. Functionally, catalyzes the conversion of (2E,6E)-farnesyl diphosphate into (-)-delta-cadinene. Cyclization mechanism involves an intermediate nerolidyl diphosphate leading to a helminthogermacradienyl cation. This is (-)-delta-cadinene synthase from Streptomyces clavuligerus.